The primary structure comprises 49 residues: Large ribosomal subunit protein bL33A (49 aa).

Belongs to the bacterial ribosomal protein bL33 family.

This is Large ribosomal subunit protein bL33A from Geobacillus thermodenitrificans (strain NG80-2).